Here is a 250-residue protein sequence, read N- to C-terminus: Non-specific acid phosphatase (250 aa).

An N-terminal signal peptide occupies residues 1 to 20 (MKSRYLLFFLPLIVAKYTSA).

This sequence belongs to the class A bacterial acid phosphatase family. In terms of assembly, homodimer.

The protein localises to the periplasm. It carries out the reaction a phosphate monoester + H2O = an alcohol + phosphate. This is Non-specific acid phosphatase (phoN) from Salmonella typhi.